Consider the following 373-residue polypeptide: 8-amino-7-oxononanoate synthase (373 aa).

Arg-16 is a binding site for substrate. Residue 93-94 coordinates pyridoxal 5'-phosphate; it reads GF. Residue His-118 participates in substrate binding. Pyridoxal 5'-phosphate-binding positions include Ser-165, 190-193, and 222-225; these read DEAH and TFSK. Lys-225 bears the N6-(pyridoxal phosphate)lysine mark. Position 334 (Thr-334) interacts with substrate.

It belongs to the class-II pyridoxal-phosphate-dependent aminotransferase family. BioF subfamily. In terms of assembly, homodimer. The cofactor is pyridoxal 5'-phosphate.

It carries out the reaction 6-carboxyhexanoyl-[ACP] + L-alanine + H(+) = (8S)-8-amino-7-oxononanoate + holo-[ACP] + CO2. The protein operates within cofactor biosynthesis; biotin biosynthesis. In terms of biological role, catalyzes the decarboxylative condensation of pimeloyl-[acyl-carrier protein] and L-alanine to produce 8-amino-7-oxononanoate (AON), [acyl-carrier protein], and carbon dioxide. The polypeptide is 8-amino-7-oxononanoate synthase (Helicobacter pylori (strain ATCC 700392 / 26695) (Campylobacter pylori)).